We begin with the raw amino-acid sequence, 280 residues long: Large ribosomal subunit protein uL2 (280 aa).

2 disordered regions span residues 1 to 58 (MAIR…GGGH) and 226 to 280 (MNPV…KHGR). Composition is skewed to basic residues over residues 37–58 (LHGH…GGGH) and 268–280 (IVRR…KHGR).

It belongs to the universal ribosomal protein uL2 family. Part of the 50S ribosomal subunit. Forms a bridge to the 30S subunit in the 70S ribosome.

Its function is as follows. One of the primary rRNA binding proteins. Required for association of the 30S and 50S subunits to form the 70S ribosome, for tRNA binding and peptide bond formation. It has been suggested to have peptidyltransferase activity; this is somewhat controversial. Makes several contacts with the 16S rRNA in the 70S ribosome. The sequence is that of Large ribosomal subunit protein uL2 from Mycolicibacterium paratuberculosis (strain ATCC BAA-968 / K-10) (Mycobacterium paratuberculosis).